The following is a 110-amino-acid chain: Insulin-1 (110 aa).

Residues 1-24 (MALWMRFLPLLALLVLWEPKPAQA) form the signal peptide. 3 cysteine pairs are disulfide-bonded: cysteine 31–cysteine 96, cysteine 43–cysteine 109, and cysteine 95–cysteine 100. Positions 57–87 (EVEDPQVPQLELGGGPEAGDLQTLALEVARQ) are cleaved as a propeptide — c peptide.

This sequence belongs to the insulin family. In terms of assembly, heterodimer of a B chain and an A chain linked by two disulfide bonds.

It is found in the secreted. Functionally, insulin decreases blood glucose concentration. It increases cell permeability to monosaccharides, amino acids and fatty acids. It accelerates glycolysis, the pentose phosphate cycle, and glycogen synthesis in liver. The chain is Insulin-1 (Ins1) from Rattus norvegicus (Rat).